A 299-amino-acid chain; its full sequence is ATP phosphoribosyltransferase (299 aa).

Belongs to the ATP phosphoribosyltransferase family. Long subfamily. It depends on Mg(2+) as a cofactor.

The protein localises to the cytoplasm. The enzyme catalyses 1-(5-phospho-beta-D-ribosyl)-ATP + diphosphate = 5-phospho-alpha-D-ribose 1-diphosphate + ATP. Its pathway is amino-acid biosynthesis; L-histidine biosynthesis; L-histidine from 5-phospho-alpha-D-ribose 1-diphosphate: step 1/9. Its activity is regulated as follows. Feedback inhibited by histidine. In terms of biological role, catalyzes the condensation of ATP and 5-phosphoribose 1-diphosphate to form N'-(5'-phosphoribosyl)-ATP (PR-ATP). Has a crucial role in the pathway because the rate of histidine biosynthesis seems to be controlled primarily by regulation of HisG enzymatic activity. This is ATP phosphoribosyltransferase from Shewanella sp. (strain MR-7).